The primary structure comprises 417 residues: Probable serpin E3 (417 aa).

Residues 1–24 (MPQLSASSLFICLWLVDLCHVANS) form the signal peptide. N-linked (GlcNAc...) asparagine glycosylation is found at Asn-50, Asn-106, Asn-140, Asn-147, and Asn-152.

This sequence belongs to the serpin family.

Its subcellular location is the secreted. Its function is as follows. Probable serine protease inhibitor. In Danio rerio (Zebrafish), this protein is Probable serpin E3 (serpine3).